A 93-amino-acid polypeptide reads, in one-letter code: Large ribosomal subunit protein uL23 (93 aa).

Belongs to the universal ribosomal protein uL23 family. In terms of assembly, part of the 50S ribosomal subunit. Contacts protein L29, and trigger factor when it is bound to the ribosome.

One of the early assembly proteins it binds 23S rRNA. One of the proteins that surrounds the polypeptide exit tunnel on the outside of the ribosome. Forms the main docking site for trigger factor binding to the ribosome. The sequence is that of Large ribosomal subunit protein uL23 from Aliarcobacter butzleri (strain RM4018) (Arcobacter butzleri).